Here is a 100-residue protein sequence, read N- to C-terminus: Large ribosomal subunit protein bL21 (100 aa).

This sequence belongs to the bacterial ribosomal protein bL21 family. As to quaternary structure, part of the 50S ribosomal subunit. Contacts protein L20.

This protein binds to 23S rRNA in the presence of protein L20. This is Large ribosomal subunit protein bL21 from Corynebacterium jeikeium (strain K411).